The primary structure comprises 227 residues: Lysosomal-associated transmembrane protein 4B (227 aa).

Transmembrane regions (helical) follow at residues 26–46 (ILLG…LLSA), 72–92 (MCIA…ATYG), 100–120 (WIIP…LVAI), and 153–173 (CLVL…GYLI). Positions 205–222 (PPYDDATAVTGTAKEPPP) are required for NEDD4 interaction.

Belongs to the LAPTM4/LAPTM5 transporter family. In terms of assembly, homooligomer; upon reaching the lysosomes. Interacts with MCOLN1. Interacts with NEDD4; may play a role in the lysosomal sorting of LAPTM4B; enhances HGS association with NEDD4; mediates inhibition of EGFR degradation. Interacts with PIP5K1C; promotes SNX5 association with LAPTM4B; kinase activity of PIP5K1C is required; interaction is regulated by phosphatidylinositol 4,5-bisphosphate generated by PIP5K1C. Interacts with HGS; promotes HGS ubiquitination. Interacts with SNX5. Interacts with SLC3A2 and SLC7A5; recruits SLC3A2 and SLC7A5 to lysosomes to promote leucine uptake into these organelles and is required for mTORC1 activation. Interacts with LRRC32; decreases TGFB1 production in regulatory T cells. Interacts with BECN1; competes with EGFR for LAPTM4B binding; regulates EGFR activity. Interacts with EGFR; positively correlates with EGFR activation. Undergoes proteolytic cleavage following delivery to the lysosomes. Post-translationally, ubiquitinated by NEDD4.

The protein localises to the endomembrane system. The protein resides in the late endosome membrane. It is found in the cell membrane. Its subcellular location is the cell projection. It localises to the lysosome membrane. The protein localises to the endosome membrane. The protein resides in the endosome. It is found in the multivesicular body membrane. Its subcellular location is the multivesicular body lumen. Its function is as follows. Required for optimal lysosomal function. Blocks EGF-stimulated EGFR intraluminal sorting and degradation. Conversely by binding with the phosphatidylinositol 4,5-bisphosphate, regulates its PIP5K1C interaction, inhibits HGS ubiquitination and relieves LAPTM4B inhibition of EGFR degradation. Recruits SLC3A2 and SLC7A5 (the Leu transporter) to the lysosome, promoting entry of leucine and other essential amino acid (EAA) into the lysosome, stimulating activation of proton-transporting vacuolar (V)-ATPase protein pump (V-ATPase) and hence mTORC1 activation. Plays a role as negative regulator of TGFB1 production in regulatory T cells. Binds ceramide and facilitates its exit from late endosome in order to control cell death pathways. This is Lysosomal-associated transmembrane protein 4B from Rattus norvegicus (Rat).